Here is a 329-residue protein sequence, read N- to C-terminus: Gut-specific cysteine proteinase (329 aa).

The signal sequence occupies residues 1-15 (MKFLILTALCAVTLA). Residues 16 to 84 (FVPINHQSAV…ATEQEVVLAS (69 aa)) constitute a propeptide, activation peptide. 6 cysteine pairs are disulfide-bonded: Cys-98–Cys-127, Cys-110–Cys-155, Cys-146–Cys-204, Cys-147–Cys-151, Cys-183–Cys-208, and Cys-191–Cys-196. Cys-113 is an active-site residue. Catalysis depends on residues His-275 and Asn-295.

The protein belongs to the peptidase C1 family. In terms of tissue distribution, larvae exhibit strong expression in gut cells and weak expression in hypodermal cells. Adults exhibit the reverse: strong expression in hypodermal cells and weaker expression in gut cells.

In terms of biological role, thiol protease. Has a role as a digestive enzyme. This chain is Gut-specific cysteine proteinase (cpr-1), found in Caenorhabditis elegans.